The primary structure comprises 77 residues: Cysteine-rich protein 1 (77 aa).

Residues 2-63 form the LIM zinc-binding domain; that stretch reads PKCPKCDKEV…HPCYSAMFGP (62 aa). 2 positions are modified to N6-acetyllysine: K9 and K22. R68 bears the Omega-N-methylarginine mark.

Its function is as follows. Seems to have a role in zinc absorption and may function as an intracellular zinc transport protein. This chain is Cysteine-rich protein 1 (Crip1), found in Mus musculus (Mouse).